Reading from the N-terminus, the 434-residue chain is ATP-dependent RNA helicase uap56 (434 aa).

Residues Met1–Gly43 form a disordered region. Residues Asp7–Val18 show a composition bias toward acidic residues. The short motif at Thr51–Gln79 is the Q motif element. The Helicase ATP-binding domain maps to Ile82–Ile257. Ala95–Thr102 is an ATP binding site. Positions Asp204–Asp207 match the DECD box motif. Residues Gly269 to Ser430 enclose the Helicase C-terminal domain.

It belongs to the DEAD box helicase family. DECD subfamily. As to quaternary structure, interacts with mlo3 and rae1.

The protein resides in the nucleus. The enzyme catalyses ATP + H2O = ADP + phosphate + H(+). ATP-binding RNA helicase involved in transcription elongation and required for the export of mRNA out of the nucleus. SUB2 also plays a role in pre-mRNA splicing and spliceosome assembly. May be involved in rDNA and telomeric silencing, and maintenance of genome integrity. Links the mRNA adapter mlo3 to rae1 for targeting mRNA-protein complex to the proteins of the nucleoporin complex (NPC). The sequence is that of ATP-dependent RNA helicase uap56 (uap56) from Schizosaccharomyces pombe (strain 972 / ATCC 24843) (Fission yeast).